We begin with the raw amino-acid sequence, 212 residues long: 2-phospho-L-lactate guanylyltransferase (212 aa).

The protein belongs to the CofC family. Homodimer.

It catalyses the reaction (2S)-2-phospholactate + GTP + H(+) = (2S)-lactyl-2-diphospho-5'-guanosine + diphosphate. It participates in cofactor biosynthesis; coenzyme F420 biosynthesis. In terms of biological role, guanylyltransferase that catalyzes the activation of (2S)-2-phospholactate (2-PL) as (2S)-lactyl-2-diphospho-5'-guanosine, via the condensation of 2-PL with GTP. It is involved in the biosynthesis of coenzyme F420, a hydride carrier cofactor. This Methanocorpusculum labreanum (strain ATCC 43576 / DSM 4855 / Z) protein is 2-phospho-L-lactate guanylyltransferase.